The sequence spans 233 residues: Large ribosomal subunit protein uL1 (233 aa).

This sequence belongs to the universal ribosomal protein uL1 family. Part of the 50S ribosomal subunit.

Binds directly to 23S rRNA. The L1 stalk is quite mobile in the ribosome, and is involved in E site tRNA release. In terms of biological role, protein L1 is also a translational repressor protein, it controls the translation of the L11 operon by binding to its mRNA. The chain is Large ribosomal subunit protein uL1 from Shewanella sp. (strain MR-4).